Consider the following 372-residue polypeptide: Putative glutamate--cysteine ligase 2 (372 aa).

Belongs to the glutamate--cysteine ligase type 2 family. YbdK subfamily.

The catalysed reaction is L-cysteine + L-glutamate + ATP = gamma-L-glutamyl-L-cysteine + ADP + phosphate + H(+). Its function is as follows. ATP-dependent carboxylate-amine ligase which exhibits weak glutamate--cysteine ligase activity. The polypeptide is Putative glutamate--cysteine ligase 2 (Rhodopirellula baltica (strain DSM 10527 / NCIMB 13988 / SH1)).